The chain runs to 227 residues: PKHD-type hydroxylase Bcep18194_B0892 (227 aa).

The 101-residue stretch at 78–178 (KVFPPLFNRY…RVASFFWIQS (101 aa)) folds into the Fe2OG dioxygenase domain. The Fe cation site is built by His96, Asp98, and His159. Arg169 is a binding site for 2-oxoglutarate.

Fe(2+) serves as cofactor. L-ascorbate is required as a cofactor.

This is PKHD-type hydroxylase Bcep18194_B0892 from Burkholderia lata (strain ATCC 17760 / DSM 23089 / LMG 22485 / NCIMB 9086 / R18194 / 383).